A 496-amino-acid chain; its full sequence is Rhamnulokinase (496 aa).

Residue A13 to R17 coordinates ATP. Substrate is bound by residues G83 and H236–T238. D237 (proton acceptor) is an active-site residue. An ATP-binding site is contributed by T259. N296 is a binding site for substrate. Position 304 (Q304) interacts with ATP. C353 and C370 are disulfide-bonded. G402 is a binding site for ATP. The cysteines at positions 413 and 417 are disulfide-linked.

It belongs to the rhamnulokinase family. Mg(2+) is required as a cofactor.

The enzyme catalyses L-rhamnulose + ATP = L-rhamnulose 1-phosphate + ADP + H(+). It functions in the pathway carbohydrate degradation; L-rhamnose degradation; glycerone phosphate from L-rhamnose: step 2/3. Involved in the catabolism of L-rhamnose (6-deoxy-L-mannose). Catalyzes the transfer of the gamma-phosphate group from ATP to the 1-hydroxyl group of L-rhamnulose to yield L-rhamnulose 1-phosphate. The protein is Rhamnulokinase of Pectobacterium carotovorum subsp. carotovorum (strain PC1).